The following is a 401-amino-acid chain: Exodeoxyribonuclease 7 large subunit (401 aa).

This sequence belongs to the XseA family. Heterooligomer composed of large and small subunits.

It is found in the cytoplasm. The enzyme catalyses Exonucleolytic cleavage in either 5'- to 3'- or 3'- to 5'-direction to yield nucleoside 5'-phosphates.. Functionally, bidirectionally degrades single-stranded DNA into large acid-insoluble oligonucleotides, which are then degraded further into small acid-soluble oligonucleotides. In Thermoanaerobacter sp. (strain X514), this protein is Exodeoxyribonuclease 7 large subunit.